The primary structure comprises 446 residues: Phosphoglucosamine mutase (446 aa).

The active-site Phosphoserine intermediate is the serine 100. 4 residues coordinate Mg(2+): serine 100, aspartate 241, aspartate 243, and aspartate 245. Serine 100 is modified (phosphoserine).

This sequence belongs to the phosphohexose mutase family. Requires Mg(2+) as cofactor. In terms of processing, activated by phosphorylation.

The catalysed reaction is alpha-D-glucosamine 1-phosphate = D-glucosamine 6-phosphate. Its function is as follows. Catalyzes the conversion of glucosamine-6-phosphate to glucosamine-1-phosphate. This Methylobacterium sp. (strain 4-46) protein is Phosphoglucosamine mutase.